The sequence spans 438 residues: tRNA modification GTPase MnmE (438 aa).

Residues Arg19, Glu76, and Lys115 each contribute to the (6S)-5-formyl-5,6,7,8-tetrahydrofolate site. One can recognise a TrmE-type G domain in the interval 211–363 (GYKVAIIGRP…LSKELESYLN (153 aa)). Residues 221-226 (NVGKSS), 240-246 (SETAGTT), and 265-268 (DTAG) contribute to the GTP site. Residues Ser225 and Thr246 each coordinate Mg(2+). Lys438 is a binding site for (6S)-5-formyl-5,6,7,8-tetrahydrofolate.

The protein belongs to the TRAFAC class TrmE-Era-EngA-EngB-Septin-like GTPase superfamily. TrmE GTPase family. In terms of assembly, homodimer. Heterotetramer of two MnmE and two MnmG subunits. K(+) is required as a cofactor.

The protein resides in the cytoplasm. Exhibits a very high intrinsic GTPase hydrolysis rate. Involved in the addition of a carboxymethylaminomethyl (cmnm) group at the wobble position (U34) of certain tRNAs, forming tRNA-cmnm(5)s(2)U34. The chain is tRNA modification GTPase MnmE from Campylobacter fetus subsp. fetus (strain 82-40).